Reading from the N-terminus, the 61-residue chain is Large ribosomal subunit protein bL32 (61 aa).

The segment covering 1–16 (MAVPKKKTSKSRKNMR) has biased composition (basic residues). The disordered stretch occupies residues 1 to 20 (MAVPKKKTSKSRKNMRRAHD).

This sequence belongs to the bacterial ribosomal protein bL32 family.

The sequence is that of Large ribosomal subunit protein bL32 from Trichlorobacter lovleyi (strain ATCC BAA-1151 / DSM 17278 / SZ) (Geobacter lovleyi).